The following is a 418-amino-acid chain: Deubiquitinase and deneddylase Dub1 (418 aa).

Positions 1-10 (MLSPTNSISK) are enriched in polar residues. The disordered stretch occupies residues 1-23 (MLSPTNSISKTAPVPPQDSSKPV). Residues 40 to 60 (TALAVLLVVVTLGLILLFYSF) traverse the membrane as a helical segment. The segment at 72-144 (TRPSTKEQPT…PLPPKAPKPV (73 aa)) is disordered. Positions 86–141 (VPLPSPPLAVPRPSTPPPPVISRPSTPPAPTPAISPPSTPSAPKPSTPPPLPPKAP) are enriched in pro residues. Active-site residues include His-288, Asp-305, and Cys-358.

This sequence belongs to the peptidase C48 family.

The protein localises to the secreted. The protein resides in the host cell. It is found in the membrane. In terms of biological role, effector proteins function to alter host cell physiology and promote bacterial survival in host tissues. This protease possesses deubiquitinating and deneddylating activities. The sequence is that of Deubiquitinase and deneddylase Dub1 (cdu1) from Chlamydia trachomatis serovar B (strain Jali20/OT).